A 201-amino-acid chain; its full sequence is CMRF35-like molecule 7 (201 aa).

Residues methionine 1–serine 17 form the signal peptide. In terms of domain architecture, Ig-like V-type spans isoleucine 18 to isoleucine 120. Topologically, residues isoleucine 18 to tyrosine 151 are extracellular. A disulfide bond links cysteine 36 and cysteine 104. A helical membrane pass occupies residues methionine 152 to leucine 172. Residues lysine 173–threonine 201 are Cytoplasmic-facing. Tyrosine 188 carries the phosphotyrosine; by FYN modification.

It belongs to the CD300 family. Interacts with TYROBP, which enhances cell surface expression and activation properties. Interacts with GRB2 in the presence of FYN. In terms of processing, phosphorylation on Tyr-188 by FYN is required for interaction with GRB2. In terms of tissue distribution, expressed exclusively in myeloid lineages.

The protein resides in the cell membrane. In terms of biological role, acts as an activating immune receptor through its interaction with ITAM-bearing adapter TYROBP, and also independently by recruitment of GRB2. The polypeptide is CMRF35-like molecule 7 (CD300LB) (Homo sapiens (Human)).